The primary structure comprises 260 residues: Pyridoxine 5'-phosphate synthase (260 aa).

Positions 10 and 21 each coordinate 3-amino-2-oxopropyl phosphate. Histidine 46 serves as the catalytic Proton acceptor. 2 residues coordinate 1-deoxy-D-xylulose 5-phosphate: arginine 48 and histidine 53. The active-site Proton acceptor is glutamate 76. Threonine 113 provides a ligand contact to 1-deoxy-D-xylulose 5-phosphate. The Proton donor role is filled by histidine 204. 3-amino-2-oxopropyl phosphate is bound by residues aspartate 205 and 227–228 (GH).

It belongs to the PNP synthase family. Homooctamer; tetramer of dimers.

The protein resides in the cytoplasm. It catalyses the reaction 3-amino-2-oxopropyl phosphate + 1-deoxy-D-xylulose 5-phosphate = pyridoxine 5'-phosphate + phosphate + 2 H2O + H(+). It participates in cofactor biosynthesis; pyridoxine 5'-phosphate biosynthesis; pyridoxine 5'-phosphate from D-erythrose 4-phosphate: step 5/5. In terms of biological role, catalyzes the complicated ring closure reaction between the two acyclic compounds 1-deoxy-D-xylulose-5-phosphate (DXP) and 3-amino-2-oxopropyl phosphate (1-amino-acetone-3-phosphate or AAP) to form pyridoxine 5'-phosphate (PNP) and inorganic phosphate. The protein is Pyridoxine 5'-phosphate synthase of Xylella fastidiosa (strain M12).